The chain runs to 716 residues: Dynein axonemal intermediate chain 7 (716 aa).

Belongs to the DNAI7 family. As to quaternary structure, part of the multisubunit axonemal dynein complex formed at least of two heavy chains and a number of intermediate and light chains. Interacts with tubulin. Associates with microtubule. In terms of processing, ubiquitinated. Ubiquitination leads to its degradation through the 26S proteasome. Ubiquitin-proteasome-mediated DNAI7 degradation occurs in mitosis.

The protein resides in the cell projection. Its subcellular location is the cilium. It is found in the cytoplasm. Functionally, via its association with the multisubunit axonemal dynein complex, is potentially involved in the regulation of cilia function. May also act as a cell cycle regulator. This is Dynein axonemal intermediate chain 7 from Homo sapiens (Human).